A 545-amino-acid chain; its full sequence is Reticulon-2 (545 aa).

Disordered regions lie at residues 1–183 and 199–250; these read MGQV…ETGE and SPEV…EREP. Over residues 14-25 the composition is skewed to low complexity; it reads APSTASSTPDST. A compositionally biased stretch (basic and acidic residues) spans 32 to 43; the sequence is SDFRELHTAREF. S44 bears the Phosphoserine mark. A compositionally biased stretch (basic and acidic residues) spans 135–146; it reads RPLEDLRLRLDH. Positions 157-166 are enriched in low complexity; it reads GEDSSTSSST. Over residues 199-230 the composition is skewed to polar residues; that stretch reads SPEVLTPQLSPGSGTPQAGTPSPSRSRDSNSG. Residues S227 and S229 each carry the phosphoserine modification. Positions 345 to 545 constitute a Reticulon domain; that stretch reads VADLLYWKDT…AVSGSKAKAE (201 aa). The next 2 membrane-spanning stretches (helical) occupy residues 368–388 and 463–483; these read LLCLLHFSIVSVAAHLALLLL and LLFYILTFVGAIFNGLTLLIL.

Interacts with isoform 1 but not isoform 3 of SPAST. Interacts with BACE1. Interacts (via first transmembrane domain) with ARL6IP5/GTRAP3-18. Interacts (via N-terminus) with SLC1A1/EAAC1; the interaction promotes cell surface expression of SLC1A1. In terms of assembly, interacts with TMEM33. As to expression, highly expressed in skeletal muscle.

It localises to the endoplasmic reticulum membrane. The protein resides in the sarcoplasmic reticulum membrane. It is found in the cell membrane. Its subcellular location is the sarcolemma. The protein localises to the T-tubule. It localises to the cytoplasm. The protein resides in the myofibril. It is found in the sarcomere. Its subcellular location is the z line. The protein localises to the cytoskeleton. Inhibits amyloid precursor protein processing, probably by blocking BACE1 activity. Enhances trafficking of the glutamate transporter SLC1A1/EAAC1 from the endoplasmic reticulum to the cell surface. Plays a role in the translocation of SLC2A4/GLUT4 from intracellular membranes to the cell membrane which facilitates the uptake of glucose into the cell. This is Reticulon-2 (RTN2) from Homo sapiens (Human).